We begin with the raw amino-acid sequence, 556 residues long: 2-isopropylmalate synthase (556 aa).

One can recognise a Pyruvate carboxyltransferase domain in the interval proline 33–aspartate 307. Residues aspartate 42, histidine 246, histidine 248, and asparagine 282 each coordinate Mg(2+). Positions alanine 439 to alanine 556 are regulatory domain.

The protein belongs to the alpha-IPM synthase/homocitrate synthase family. LeuA type 2 subfamily. Homodimer. Mg(2+) is required as a cofactor.

The protein resides in the cytoplasm. It carries out the reaction 3-methyl-2-oxobutanoate + acetyl-CoA + H2O = (2S)-2-isopropylmalate + CoA + H(+). It participates in amino-acid biosynthesis; L-leucine biosynthesis; L-leucine from 3-methyl-2-oxobutanoate: step 1/4. In terms of biological role, catalyzes the condensation of the acetyl group of acetyl-CoA with 3-methyl-2-oxobutanoate (2-ketoisovalerate) to form 3-carboxy-3-hydroxy-4-methylpentanoate (2-isopropylmalate). The sequence is that of 2-isopropylmalate synthase from Stutzerimonas stutzeri (strain A1501) (Pseudomonas stutzeri).